The primary structure comprises 354 residues: Polyribonucleotide 5'-hydroxyl-kinase PF0112 (354 aa).

Residue 36-43 (GDVDTGKT) coordinates ATP.

A divalent metal cation is required as a cofactor.

It carries out the reaction a 5'-end dephospho-2'-deoxyribonucleoside-DNA + ATP = a 5'-end 5'-phospho-2'-deoxyribonucleoside-DNA + ADP + H(+). It catalyses the reaction a 5'-end dephospho-ribonucleoside-RNA + ATP = a 5'-end 5'-phospho-ribonucleoside-RNA + ADP + H(+). Polynucleotide kinase that can phosphorylate the 5'-hydroxyl groups of both single-stranded RNA (ssRNA) and single-stranded DNA (ssDNA). Exhibits a strong preference for ssRNA. This chain is Polyribonucleotide 5'-hydroxyl-kinase PF0112, found in Pyrococcus furiosus (strain ATCC 43587 / DSM 3638 / JCM 8422 / Vc1).